We begin with the raw amino-acid sequence, 549 residues long: Glucose-6-phosphate isomerase (549 aa).

Glu-355 acts as the Proton donor in catalysis. Residues His-386 and Lys-514 contribute to the active site.

This sequence belongs to the GPI family.

The protein localises to the cytoplasm. It catalyses the reaction alpha-D-glucose 6-phosphate = beta-D-fructose 6-phosphate. Its pathway is carbohydrate biosynthesis; gluconeogenesis. It participates in carbohydrate degradation; glycolysis; D-glyceraldehyde 3-phosphate and glycerone phosphate from D-glucose: step 2/4. Functionally, catalyzes the reversible isomerization of glucose-6-phosphate to fructose-6-phosphate. This chain is Glucose-6-phosphate isomerase, found in Sodalis glossinidius (strain morsitans).